We begin with the raw amino-acid sequence, 349 residues long: Homeobox-leucine zipper protein HOX5 (349 aa).

Positions 83-142 (APEKKRRLTAEQVQMLERSFEEENKLEPERKTELARRLGMAPRQVAVWFQNRRARWKTKQ) form a DNA-binding region, homeobox. The segment at 141–185 (KQLEHDFDRLKAAYDALAADHHALLSDNDRLRAQVISLTEKLQDK) is leucine-zipper. Residues 181-253 (KLQDKETSPS…GTNDDGDGGA (73 aa)) form a disordered region. The span at 188–198 (SPSSATITTAA) shows a compositional bias: low complexity.

It belongs to the HD-ZIP homeobox family. Class I subfamily. In terms of assembly, homodimer. May form a heterodimer with HOX4. As to expression, expressed in seedlings, roots, leaves, nodes, internodes, flowers and embryo.

It localises to the nucleus. Probable transcription activator that binds to the DNA sequence 5'-CAAT[AT]ATTG-3'. The sequence is that of Homeobox-leucine zipper protein HOX5 (HOX5) from Oryza sativa subsp. japonica (Rice).